A 327-amino-acid chain; its full sequence is Acyl-CoA desaturase (327 aa).

The Cytoplasmic segment spans residues 1 to 39 (MPDREIKSPIWHPEPGTVEDVFDHTYKEKEGPKPPTVIV). The helical transmembrane segment at 40-60 (WRNVILMSLLHLGALYGLFLF) threads the bilayer. Residue asparagine 42 coordinates substrate. Topologically, residues 61 to 64 (PSAR) are lumenal. A helical transmembrane segment spans residues 65–85 (ALTWIWFFGCLLFSALGITAG). Over 86–184 (AHRLWSHRSY…DKVVMFQRRF (99 aa)) the chain is Cytoplasmic. Residues histidine 87 and histidine 92 each coordinate Fe cation. Positions 87–92 (HRLWSH) match the Histidine box-1 motif. 3 residues coordinate substrate: asparagine 115, arginine 122, and aspartate 123. The Fe cation site is built by histidine 124, histidine 127, and histidine 128. The short motif at 124 to 128 (HRVHH) is the Histidine box-2 element. Residues arginine 155 and lysine 156 each coordinate substrate. The helical transmembrane segment at 185–204 (YKPSVLLMCFFVPTFVPWYV) threads the bilayer. Topologically, residues 205–208 (WGES) are lumenal. A helical transmembrane segment spans residues 209–230 (LWVAYFVPALLRYALVLNATWL). Tryptophan 229 contacts substrate. Residues 231–327 (VNSAAHMWGN…RTGDGSHWSG (97 aa)) are Cytoplasmic-facing. The Fe cation site is built by histidine 236, histidine 265, histidine 268, and histidine 269. A Histidine box-3 motif is present at residues 265 to 269 (HNYHH).

The protein belongs to the fatty acid desaturase type 1 family. Requires Fe(2+) as cofactor.

It localises to the endoplasmic reticulum membrane. It carries out the reaction octadecanoyl-CoA + 2 Fe(II)-[cytochrome b5] + O2 + 2 H(+) = (9Z)-octadecenoyl-CoA + 2 Fe(III)-[cytochrome b5] + 2 H2O. Its function is as follows. Stearoyl-CoA desaturase that utilizes O(2) and electrons from reduced cytochrome b5 to introduce the first double bond into saturated fatty acyl-CoA substrates. Has high specificity and catalyzes the insertion of a cis double bond at the delta-9 position into fatty acyl-CoA substrates including palmitoyl-CoA and stearoyl-CoA. Contributes to the biosynthesis of membrane phospholipids, cholesterol esters and triglycerides. In Cyprinus carpio (Common carp), this protein is Acyl-CoA desaturase.